Here is a 286-residue protein sequence, read N- to C-terminus: MANAKEIKTKIASVKNTQKITSAMEMVAASKMRKAQDRMAASRPYAENMRKVIGHVAQGSLEYKHPYLEVREAKRVGYIVVSTDRGLCGGLNVNLFKKVVADVKSQREQGVEVEFCPIGARSVQFFNSFGGQVSAYASGLGDAPKLADLIGTVRVMLQAYNEGKLDRLYVVFNRFVNTMSQTPVIEQLLPLPKSEVDEVSHHWDYLYEPDPKELLETLLVRYVESQVYQGVVENLASEQAARMVAMKSATDNAGDLISDLQLVYNKARQAAITQELSEIVAGAAAV.

This sequence belongs to the ATPase gamma chain family. F-type ATPases have 2 components, CF(1) - the catalytic core - and CF(0) - the membrane proton channel. CF(1) has five subunits: alpha(3), beta(3), gamma(1), delta(1), epsilon(1). CF(0) has three main subunits: a, b and c.

It is found in the cell inner membrane. Functionally, produces ATP from ADP in the presence of a proton gradient across the membrane. The gamma chain is believed to be important in regulating ATPase activity and the flow of protons through the CF(0) complex. This is ATP synthase gamma chain from Shewanella sediminis (strain HAW-EB3).